A 220-amino-acid polypeptide reads, in one-letter code: MASAGMQILGVVLTLLGWVNGLVSCALPMWKVTAFIGNSIVVAQVVWEGLWMSCVVQSTGQMQCKVYDSLLALPQDLQAARALCVIALLVALFGLLVYLAGAKCTTCVEEKDSKARLVLTSGIVFVISGVLTLIPVCWTAHAIIRDFYNPLVAEAQKRELGASLYLGWAASGLLLLGGGLLCCTCPSGGSQGPSHYMARYSTSAPAISRGPSEYPTKNYV.

Topologically, residues 1-7 are cytoplasmic; that stretch reads MASAGMQ. A helical membrane pass occupies residues 8–28; sequence ILGVVLTLLGWVNGLVSCALP. Topologically, residues 29-81 are extracellular; it reads MWKVTAFIGNSIVVAQVVWEGLWMSCVVQSTGQMQCKVYDSLLALPQDLQAAR. The chain crosses the membrane as a helical span at residues 82–102; that stretch reads ALCVIALLVALFGLLVYLAGA. The Cytoplasmic segment spans residues 103–116; it reads KCTTCVEEKDSKAR. Residues 117 to 137 form a helical membrane-spanning segment; that stretch reads LVLTSGIVFVISGVLTLIPVC. At 138 to 160 the chain is on the extracellular side; that stretch reads WTAHAIIRDFYNPLVAEAQKREL. The helical transmembrane segment at 161 to 181 threads the bilayer; the sequence is GASLYLGWAASGLLLLGGGLL. The Cytoplasmic portion of the chain corresponds to 182–220; sequence CCTCPSGGSQGPSHYMARYSTSAPAISRGPSEYPTKNYV. 4 positions are modified to phosphoserine: Ser201, Ser203, Ser208, and Ser212. The interactions with TJP1, TJP2 and TJP3 stretch occupies residues 219-220; the sequence is YV.

This sequence belongs to the claudin family. In terms of assembly, directly interacts with TJP1/ZO-1, TJP2/ZO-2 and TJP3/ZO-3. Interacts with CLDN1, CD81 and OCLN. Expressed in the liver, in peripheral blood mononuclear cells and hepatocarcinoma cell lines.

It is found in the cell junction. It localises to the tight junction. Its subcellular location is the cell membrane. In terms of biological role, plays a major role in tight junction-specific obliteration of the intercellular space. Its function is as follows. (Microbial infection) Acts as a receptor for hepatitis C virus (HCV) entry into hepatic cells. This chain is Claudin-6 (CLDN6), found in Homo sapiens (Human).